The following is an 86-amino-acid chain: Small ribosomal subunit protein bS16 (86 aa).

Belongs to the bacterial ribosomal protein bS16 family.

The sequence is that of Small ribosomal subunit protein bS16 from Legionella pneumophila (strain Paris).